The chain runs to 123 residues: Integration host factor subunit alpha (123 aa).

The interval 97-123 (NANGSAPSMSSSASAVDDDKSESASRT) is disordered. The span at 98 to 111 (ANGSAPSMSSSASA) shows a compositional bias: low complexity. Over residues 113-123 (DDDKSESASRT) the composition is skewed to basic and acidic residues.

This sequence belongs to the bacterial histone-like protein family. Heterodimer of an alpha and a beta chain.

Functionally, this protein is one of the two subunits of integration host factor, a specific DNA-binding protein that functions in genetic recombination as well as in transcriptional and translational control. The sequence is that of Integration host factor subunit alpha from Rhodopseudomonas palustris (strain BisB5).